The sequence spans 328 residues: D-cysteine desulfhydrase (328 aa).

Position 51 is an N6-(pyridoxal phosphate)lysine (Lys-51).

Belongs to the ACC deaminase/D-cysteine desulfhydrase family. In terms of assembly, homodimer. Pyridoxal 5'-phosphate is required as a cofactor.

The catalysed reaction is D-cysteine + H2O = hydrogen sulfide + pyruvate + NH4(+) + H(+). In terms of biological role, catalyzes the alpha,beta-elimination reaction of D-cysteine and of several D-cysteine derivatives. It could be a defense mechanism against D-cysteine. This chain is D-cysteine desulfhydrase, found in Salmonella paratyphi A (strain AKU_12601).